We begin with the raw amino-acid sequence, 22 residues long: Plasticin-TR (22 aa).

It belongs to the frog skin active peptide (FSAP) family. Plasticin subfamily. Exhibits a propensity to self-association and forms helical oligomers in membrane-mimetic environments. Expressed by the skin glands.

The protein resides in the secreted. The protein localises to the target cell membrane. Its function is as follows. Has no antimicrobial activity against Gram-negative bacterium E.coli ATCC 25922, Gram-positive bacterium S.epidermidis ATCC 12228 and against fungus C.albicans ATCC 24433 at concentrations up to 100 uM. Has an anti-inflammatory effect, since it inhibits the production of the pro-inflammatory cytokines TNF-alpha and IL-1 beta. Has high activity of stimulation of insulin release, which may protect the species from being eaten by predators by causing fatal hypoglycemia. Is not cytotoxic to cancer line cells. Does not show hemolysis on mouse erythrocytes. Adopts a mixture of alpha-helical and beta-sheet structures. This is Plasticin-TR from Phyllomedusa trinitatis (Trinidad leaf frog).